A 46-amino-acid chain; its full sequence is Crambin (46 aa).

Disulfide bonds link Cys3/Cys40, Cys4/Cys32, and Cys16/Cys26.

The protein belongs to the plant thionin (TC 1.C.44) family.

The protein resides in the secreted. The function of this hydrophobic plant seed protein is not known. The protein is Crambin (THI2) of Crambe hispanica subsp. abyssinica (Abyssinian kale).